A 178-amino-acid polypeptide reads, in one-letter code: uncharacterized protein (178 aa).

Residues 64–103 (GVSDNTNKTTAKDNVSDKSSENEVAQPKQVTPPVDATGNT) form a disordered region. Over residues 73 to 84 (TAKDNVSDKSSE) the composition is skewed to basic and acidic residues.

This is an uncharacterized protein from Acidianus sp. F28 (AFV-2).